A 250-amino-acid chain; its full sequence is DNA polymerase sliding clamp (250 aa).

This sequence belongs to the PCNA family. Homotrimer. The subunits circularize to form a toroid; DNA passes through its center. Replication factor C (RFC) is required to load the toroid on the DNA.

In terms of biological role, sliding clamp subunit that acts as a moving platform for DNA processing. Responsible for tethering the catalytic subunit of DNA polymerase and other proteins to DNA during high-speed replication. This Methanococcus maripaludis (strain C5 / ATCC BAA-1333) protein is DNA polymerase sliding clamp.